A 279-amino-acid polypeptide reads, in one-letter code: Proline-rich protein 23D1 (279 aa).

2 disordered regions span residues 1–60 (MYGY…PHLN) and 247–270 (LRPMPPSPSPGPQVYHRVHHRPPS). Residues 15-33 (TEPQNDNEGETSLATTQMN) show a composition bias toward polar residues.

This sequence belongs to the PRR23 family.

This is Proline-rich protein 23D1 (PRR23D1) from Homo sapiens (Human).